The sequence spans 228 residues: Cytochrome c oxidase subunit 2 (228 aa).

The Mitochondrial intermembrane portion of the chain corresponds to 1-26 (MATWANLGLQNSSSPLMEQLNFFHDH). The chain crosses the membrane as a helical span at residues 27–48 (TVLILIMITVMITYVMGMLFFN). At 49–62 (KFTNRYLLHGQTIE) the chain is on the mitochondrial matrix side. A helical membrane pass occupies residues 63–82 (IIWTILPAIILMFIAFPSLR). Topologically, residues 83–228 (LLYLLDEINS…FIKWVSSQLN (146 aa)) are mitochondrial intermembrane. Cu cation contacts are provided by His-161, Cys-196, Glu-198, Cys-200, His-204, and Met-207. Residue Glu-198 participates in Mg(2+) binding.

This sequence belongs to the cytochrome c oxidase subunit 2 family. As to quaternary structure, component of the cytochrome c oxidase (complex IV, CIV), a multisubunit enzyme composed of a catalytic core of 3 subunits and several supernumerary subunits. The complex exists as a monomer or a dimer and forms supercomplexes (SCs) in the inner mitochondrial membrane with ubiquinol-cytochrome c oxidoreductase (cytochrome b-c1 complex, complex III, CIII). Cu cation is required as a cofactor.

It localises to the mitochondrion inner membrane. It carries out the reaction 4 Fe(II)-[cytochrome c] + O2 + 8 H(+)(in) = 4 Fe(III)-[cytochrome c] + 2 H2O + 4 H(+)(out). Functionally, component of the cytochrome c oxidase, the last enzyme in the mitochondrial electron transport chain which drives oxidative phosphorylation. The respiratory chain contains 3 multisubunit complexes succinate dehydrogenase (complex II, CII), ubiquinol-cytochrome c oxidoreductase (cytochrome b-c1 complex, complex III, CIII) and cytochrome c oxidase (complex IV, CIV), that cooperate to transfer electrons derived from NADH and succinate to molecular oxygen, creating an electrochemical gradient over the inner membrane that drives transmembrane transport and the ATP synthase. Cytochrome c oxidase is the component of the respiratory chain that catalyzes the reduction of oxygen to water. Electrons originating from reduced cytochrome c in the intermembrane space (IMS) are transferred via the dinuclear copper A center (CU(A)) of subunit 2 and heme A of subunit 1 to the active site in subunit 1, a binuclear center (BNC) formed by heme A3 and copper B (CU(B)). The BNC reduces molecular oxygen to 2 water molecules using 4 electrons from cytochrome c in the IMS and 4 protons from the mitochondrial matrix. This Culex quinquefasciatus (Southern house mosquito) protein is Cytochrome c oxidase subunit 2 (COII).